The sequence spans 417 residues: Serine hydroxymethyltransferase (417 aa).

(6S)-5,6,7,8-tetrahydrofolate contacts are provided by residues L121 and 125–127 (GHL). K229 carries the N6-(pyridoxal phosphate)lysine modification. 355–357 (SPF) contributes to the (6S)-5,6,7,8-tetrahydrofolate binding site.

This sequence belongs to the SHMT family. In terms of assembly, homodimer. Pyridoxal 5'-phosphate serves as cofactor.

It localises to the cytoplasm. The enzyme catalyses (6R)-5,10-methylene-5,6,7,8-tetrahydrofolate + glycine + H2O = (6S)-5,6,7,8-tetrahydrofolate + L-serine. Its pathway is one-carbon metabolism; tetrahydrofolate interconversion. It functions in the pathway amino-acid biosynthesis; glycine biosynthesis; glycine from L-serine: step 1/1. Its function is as follows. Catalyzes the reversible interconversion of serine and glycine with tetrahydrofolate (THF) serving as the one-carbon carrier. This reaction serves as the major source of one-carbon groups required for the biosynthesis of purines, thymidylate, methionine, and other important biomolecules. Also exhibits THF-independent aldolase activity toward beta-hydroxyamino acids, producing glycine and aldehydes, via a retro-aldol mechanism. The chain is Serine hydroxymethyltransferase from Sodalis glossinidius (strain morsitans).